The primary structure comprises 290 residues: Acetyl-coenzyme A carboxylase carboxyl transferase subunit beta (290 aa).

One can recognise a CoA carboxyltransferase N-terminal domain in the interval 27 to 290; sequence LWHKCPSCEA…FTHSPSPVSA (264 aa). Residues C31, C34, C50, and C53 each coordinate Zn(2+). The segment at 31–53 adopts a C4-type zinc-finger fold; that stretch reads CPSCEAVLYRPELEKTLDVCPKC.

It belongs to the AccD/PCCB family. As to quaternary structure, acetyl-CoA carboxylase is a heterohexamer composed of biotin carboxyl carrier protein (AccB), biotin carboxylase (AccC) and two subunits each of ACCase subunit alpha (AccA) and ACCase subunit beta (AccD). It depends on Zn(2+) as a cofactor.

It localises to the cytoplasm. It catalyses the reaction N(6)-carboxybiotinyl-L-lysyl-[protein] + acetyl-CoA = N(6)-biotinyl-L-lysyl-[protein] + malonyl-CoA. The protein operates within lipid metabolism; malonyl-CoA biosynthesis; malonyl-CoA from acetyl-CoA: step 1/1. Functionally, component of the acetyl coenzyme A carboxylase (ACC) complex. Biotin carboxylase (BC) catalyzes the carboxylation of biotin on its carrier protein (BCCP) and then the CO(2) group is transferred by the transcarboxylase to acetyl-CoA to form malonyl-CoA. The sequence is that of Acetyl-coenzyme A carboxylase carboxyl transferase subunit beta from Pseudomonas aeruginosa (strain UCBPP-PA14).